The chain runs to 118 residues: Large ribosomal subunit protein bL20 (118 aa).

It belongs to the bacterial ribosomal protein bL20 family.

Its function is as follows. Binds directly to 23S ribosomal RNA and is necessary for the in vitro assembly process of the 50S ribosomal subunit. It is not involved in the protein synthesizing functions of that subunit. This chain is Large ribosomal subunit protein bL20, found in Pseudomonas syringae pv. syringae (strain B728a).